Consider the following 445-residue polypeptide: Aminopeptidase S (445 aa).

Residues methionine 1–alanine 45 form the signal peptide. Positions 48 and 49 each coordinate Ca(2+). Positions 130 and 142 each coordinate Zn(2+). The active-site Proton acceptor is the glutamate 176. Positions 177, 205, and 292 each coordinate Zn(2+). Residues cysteine 290 and cysteine 295 are joined by a disulfide bond. Residues aspartate 307 and aspartate 311 each contribute to the Ca(2+) site. A P/Homo B domain is found at glycine 325–phenylalanine 445. Positions glycine 330–phenylalanine 445 are cleaved as a propeptide — removed in mature form.

This sequence belongs to the peptidase M28 family. M28A subfamily. In terms of assembly, monomer. The cofactor is Ca(2+). Zn(2+) is required as a cofactor. Requires Mn(2+) as cofactor. It depends on Co(2+) as a cofactor.

It is found in the secreted. It carries out the reaction Release of an N-terminal amino acid with a preference for large hydrophobic amino-terminus residues.. With respect to regulation, calcium activates the enzyme, inhibited by 1,10-phenanthroline, EDTA and EGTA. End-product inhibited by L-amino acids. Non-competitively inhibited by NaF and NaH(2)PO(4). In terms of biological role, an exopeptidase specific for larger hydrophobic amino acids (especially leucine), no cleavage occurs if the next residue is proline. The chain is Aminopeptidase S from Streptomyces griseus subsp. griseus (strain JCM 4626 / CBS 651.72 / NBRC 13350 / KCC S-0626 / ISP 5235).